A 160-amino-acid polypeptide reads, in one-letter code: MSNYEIMILANPDSTLEQVSELLFSVLKKSDTKIEKLERSELAYPIHKLTRATYYLVTVKSDPQLMAELTRKLNIAKFILRSLIINLDSEKGLKPRKVKRFIPRAKNNDRSANQGDRRPFIRRNQTTDASKTEASTEATASKQSEQTTTKPRTRKVSKEQ.

Residues 96 to 160 (RKVKRFIPRA…PRTRKVSKEQ (65 aa)) are disordered. Residues 126-145 (TTDASKTEASTEATASKQSE) are compositionally biased toward low complexity. Residues 151–160 (PRTRKVSKEQ) are compositionally biased toward basic residues.

It belongs to the bacterial ribosomal protein bS6 family.

Its function is as follows. Binds together with bS18 to 16S ribosomal RNA. This Metamycoplasma arthritidis (strain 158L3-1) (Mycoplasma arthritidis) protein is Small ribosomal subunit protein bS6.